A 384-amino-acid chain; its full sequence is Probable E3 ubiquitin-protein ligase rnf113 (384 aa).

Positions 1–11 (MDLFRKPKKRN) are enriched in basic residues. The interval 1–96 (MDLFRKPKKR…GPSGPRDQGA (96 aa)) is disordered. Over residues 42–52 (PMVQSTKQLDA) the composition is skewed to polar residues. Positions 60–71 (SSDDSDDSDDNQ) are enriched in acidic residues. The C3H1-type zinc-finger motif lies at 175–203 (DFAPDICKDYKETGFCTFGDSCKFVHDRS). Residues 241–279 (CFICGNPFVDPIVTKCKHYFCTGCALKSFQKSSKCPICQ) form an RING-type zinc finger. The segment at 299 to 384 (KKQQQKQEAE…ESDDDDAEKD (86 aa)) is disordered. 2 stretches are compositionally biased toward basic and acidic residues: residues 303 to 312 (QKQEAEKQEE) and 320 to 334 (EKPH…HDHE). Over residues 351 to 384 (EKSDEEQEIMMEDVEGLEGGENDSESDDDDAEKD) the composition is skewed to acidic residues.

It carries out the reaction S-ubiquitinyl-[E2 ubiquitin-conjugating enzyme]-L-cysteine + [acceptor protein]-L-lysine = [E2 ubiquitin-conjugating enzyme]-L-cysteine + N(6)-ubiquitinyl-[acceptor protein]-L-lysine.. It participates in protein modification; protein ubiquitination. Its function is as follows. May function as E3 ubiquitin-protein ligase that catalyzes the transfer of ubiquitin onto target proteins. May play a role in DNA repair via its role in the synthesis of 'Lys-63'-linked polyubiquitin chains that recruit proteins involved in repair to sites of DNA damage by alkylating agents. The chain is Probable E3 ubiquitin-protein ligase rnf113 (rnf-113) from Caenorhabditis elegans.